Consider the following 277-residue polypeptide: Undecaprenyl-diphosphatase (277 aa).

6 helical membrane-spanning segments follow: residues 47–67, 85–105, 108–128, 183–203, 218–238, and 249–269; these read FNII…RGKI, ANLL…ADLI, WLFN…VMLW, AATE…AVYS, VFAV…RALL, and FAWY…FHLI.

It belongs to the UppP family.

Its subcellular location is the cell inner membrane. It carries out the reaction di-trans,octa-cis-undecaprenyl diphosphate + H2O = di-trans,octa-cis-undecaprenyl phosphate + phosphate + H(+). Catalyzes the dephosphorylation of undecaprenyl diphosphate (UPP). Confers resistance to bacitracin. The protein is Undecaprenyl-diphosphatase of Pseudomonas aeruginosa (strain UCBPP-PA14).